Consider the following 1676-residue polypeptide: Protein TIC 214 (1676 aa).

Helical transmembrane passes span 23–43 (AGPL…PIAP), 71–91 (GILI…FLSI), 96–116 (LYMI…YMFF), 145–165 (AFLD…SPVM), 179–199 (VSLF…MFVL), and 226–246 (IFPP…PVSF).

It belongs to the TIC214 family. As to quaternary structure, part of the Tic complex.

It localises to the plastid. Its subcellular location is the chloroplast inner membrane. Functionally, involved in protein precursor import into chloroplasts. May be part of an intermediate translocation complex acting as a protein-conducting channel at the inner envelope. This is Protein TIC 214 from Zygnema circumcarinatum (Green alga).